The sequence spans 344 residues: UDP-N-acetylglucosamine transporter UGNT1 (344 aa).

Positions 1-23 (MRNNPVLPVSDPPLAGENDSDGK) are disordered. Transmembrane regions (helical) follow at residues 41–61 (YAAL…KAAL), 66–86 (FPCV…FLYA), 92–112 (IISF…FVPV), 114–134 (TLFH…ASMA), 167–187 (YTRS…FAGA), 194–214 (FYGY…LATI), 226–246 (FGLM…WTFI), 264–284 (FMVV…CIFL), and 304–324 (FTVG…MNVI).

This sequence belongs to the TPT transporter family. UGnT (TC 2.A.7.15) subfamily. Expressed in roots, leaves, stems, flowers and siliques.

It is found in the golgi apparatus membrane. Its function is as follows. Mediates the transport of UDP-N-acetylglucosamine (UDP-GlcNAc) across the Golgi apparatus membrane. Delivers an essential substrate for the maturation of N-glycans and the GlcNAc-containing glycosyl inositol phosphorylceramide (GIPC) class of sphingolipids in the Golgi apparatus. This Arabidopsis thaliana (Mouse-ear cress) protein is UDP-N-acetylglucosamine transporter UGNT1.